We begin with the raw amino-acid sequence, 161 residues long: SsrA-binding protein (161 aa).

The protein belongs to the SmpB family.

It localises to the cytoplasm. Functionally, required for rescue of stalled ribosomes mediated by trans-translation. Binds to transfer-messenger RNA (tmRNA), required for stable association of tmRNA with ribosomes. tmRNA and SmpB together mimic tRNA shape, replacing the anticodon stem-loop with SmpB. tmRNA is encoded by the ssrA gene; the 2 termini fold to resemble tRNA(Ala) and it encodes a 'tag peptide', a short internal open reading frame. During trans-translation Ala-aminoacylated tmRNA acts like a tRNA, entering the A-site of stalled ribosomes, displacing the stalled mRNA. The ribosome then switches to translate the ORF on the tmRNA; the nascent peptide is terminated with the 'tag peptide' encoded by the tmRNA and targeted for degradation. The ribosome is freed to recommence translation, which seems to be the essential function of trans-translation. The protein is SsrA-binding protein of Desulforamulus reducens (strain ATCC BAA-1160 / DSM 100696 / MI-1) (Desulfotomaculum reducens).